The sequence spans 138 residues: Biopolymer transport protein exbD1 (138 aa).

Topologically, residues 1–16 are cytoplasmic; the sequence is MIKSSAKHNDFGLTPD. A helical transmembrane segment spans residues 17–37; it reads LTPLLDIIFIVMVFLLLTASV. Over 38-138 the chain is Periplasmic; the sequence is RLESLEVALP…TQLLTEPSHS (101 aa).

This sequence belongs to the ExbD/TolR family. As to quaternary structure, the accessory proteins ExbB and ExbD seem to form a complex with TonB.

The protein localises to the cell inner membrane. Its function is as follows. Involved in the TonB-dependent energy-dependent transport of various receptor-bound substrates. This chain is Biopolymer transport protein exbD1 (exbD1), found in Vibrio cholerae serotype O1 (strain ATCC 39315 / El Tor Inaba N16961).